Reading from the N-terminus, the 256-residue chain is MLKFVILVCSVACVFGAVVPGGMLPQLDGRIVGGFEADIEDFPWQVSIQRGGYHFCGGSIYSPEIIVTAAHCLEKIDASQLRVRVGGSYWDEEGSLLTVSNFKIHEKYDAMIMWYDVALLKLSSKLTYGATVKNIELAKETPPDNADAVVSGWGTIYENYPYMPVQLRSVDVKIVSREVCRSDEYGYGNAIGPTMICAYAVGKDACQGDSGGPLVVGEALVGVVSWGEGCAYPGFPGVYTDVSVVRSWITENAKSF.

Residues 1–22 (MLKFVILVCSVACVFGAVVPGG) form the signal peptide. Positions 23–30 (MLPQLDGR) are cleaved as a propeptide — activation peptide. In terms of domain architecture, Peptidase S1 spans 31-254 (IVGGFEADIE…VRSWITENAK (224 aa)). Residues Cys56 and Cys72 are joined by a disulfide bond. Catalysis depends on charge relay system residues His71 and Asp116. Intrachain disulfides connect Cys180/Cys197 and Cys206/Cys230. The Charge relay system role is filled by Ser210.

It belongs to the peptidase S1 family.

The protein localises to the secreted. Its function is as follows. Protease that shows preferential cleavage after Arg and Lys residues. The chain is Hypodermin-B from Hypoderma lineatum (Early cattle grub).